The sequence spans 454 residues: Glutamine synthetase (454 aa).

A GS beta-grasp domain is found at 19-111 (NNVKFIRFQF…VICDVYKDEK (93 aa)). Residues 118–454 (PRSRLKAILE…DWETGKYLIY (337 aa)) form the GS catalytic domain. The Mg(2+) site is built by E142 and E144. E194 serves as a coordination point for ATP. Mg(2+) contacts are provided by E199 and E206. Residues 250-251 (NG) and G251 each bind L-glutamate. Residue H255 participates in Mg(2+) binding. Residues 257-259 (HQS) and S259 each bind ATP. Residues R309, E315, and R327 each contribute to the L-glutamate site. R327, R332, and K339 together coordinate ATP. E344 is a binding site for Mg(2+). R346 is a binding site for L-glutamate.

It belongs to the glutamine synthetase family. In terms of assembly, oligomer of 12 subunits arranged in the form of two hexagons. Mg(2+) is required as a cofactor.

The protein resides in the cytoplasm. It catalyses the reaction L-glutamate + NH4(+) + ATP = L-glutamine + ADP + phosphate + H(+). Its activity is regulated as follows. Feedback inhibited by glycine and alanine, and inhibited by low concentrations of methionine sulfoximine. In terms of biological role, probably involved in nitrogen metabolism via ammonium assimilation. Catalyzes the ATP-dependent biosynthesis of glutamine from glutamate and ammonia. Beta-glutamate is a much poorer substrate than alpha-glutamate. The chain is Glutamine synthetase from Methanocaldococcus jannaschii (strain ATCC 43067 / DSM 2661 / JAL-1 / JCM 10045 / NBRC 100440) (Methanococcus jannaschii).